Reading from the N-terminus, the 474-residue chain is Dihydrolipoyl dehydrogenase (474 aa).

FAD is bound by residues E39–C47, K56, and A118. C47 and C52 are disulfide-bonded. Residues G186–I190, E209, and A275–R278 each bind NAD(+). 2 residues coordinate FAD: D318 and A326. H450 functions as the Proton acceptor in the catalytic mechanism.

The protein belongs to the class-I pyridine nucleotide-disulfide oxidoreductase family. In terms of assembly, homodimer. FAD serves as cofactor.

It localises to the cytoplasm. It catalyses the reaction N(6)-[(R)-dihydrolipoyl]-L-lysyl-[protein] + NAD(+) = N(6)-[(R)-lipoyl]-L-lysyl-[protein] + NADH + H(+). The protein is Dihydrolipoyl dehydrogenase (lpdA) of Halobacterium salinarum (strain ATCC 700922 / JCM 11081 / NRC-1) (Halobacterium halobium).